Consider the following 730-residue polypeptide: Semaphorin-1A (730 aa).

A signal peptide spans Met-1 to Ala-20. Topologically, residues Trp-21–Thr-630 are extracellular. The Sema domain occupies Lys-28–Leu-490. Asn-44 and Asn-71 each carry an N-linked (GlcNAc...) asparagine glycan. Cystine bridges form between Cys-97–Cys-107 and Cys-125–Cys-134. N-linked (GlcNAc...) asparagine glycosylation is found at Asn-163 and Asn-267. 2 disulfides stabilise this stretch: Cys-244-Cys-358 and Cys-268-Cys-317. Residue Asn-360 is glycosylated (N-linked (GlcNAc...) asparagine). 2 disulfide bridges follow: Cys-493–Cys-512 and Cys-504–Cys-521. The N-linked (GlcNAc...) asparagine glycan is linked to Asn-539. Residues Ile-631–Phe-651 traverse the membrane as a helical segment. Over Ser-652 to Ile-730 the chain is Cytoplasmic. The segment covering Ala-708–Lys-720 has biased composition (low complexity). The disordered stretch occupies residues Ala-708–Ile-730.

The protein belongs to the semaphorin family. Dynamically expressed on a subset of axon pathways in the developing CNS and on circumferential bands of epithelial cells in developing limb buds.

Its subcellular location is the membrane. In terms of biological role, plays a role in growth cones guidance. The polypeptide is Semaphorin-1A (SEMA-1A) (Schistocerca americana (American grasshopper)).